A 351-amino-acid chain; its full sequence is Formyl peptide receptor-related sequence 1 (351 aa).

Residues 1 to 27 (METNYSIPLNGSDVVIYDSTISRVLWI) are Extracellular-facing. N-linked (GlcNAc...) asparagine glycosylation is found at Asn4 and Asn10. A helical transmembrane segment spans residues 28–50 (LSMVVVSITFFLGVLGNGLVIWV). Residues 51–61 (AGFRMPHTVTT) lie on the Cytoplasmic side of the membrane. Residues 62–83 (IWYLNLALADFSFTATLPFLLV) form a helical membrane-spanning segment. Topologically, residues 84–100 (EMAMKEKWPFGWFLCKL) are extracellular. A disulfide bond links Cys98 and Cys176. A helical transmembrane segment spans residues 101 to 121 (VHIAVDVNLFGSVFLIAVIAL). The Cytoplasmic segment spans residues 122-140 (DRCICVLHPVWAQNHRTVS). The chain crosses the membrane as a helical span at residues 141–162 (LARNVVVGSWIFALILTLPLFL). Over 163–205 (FLTTVRDARGDVHCRLSFVSWGNSVEERLNTAITFVTTRGIIR) the chain is Extracellular. The chain crosses the membrane as a helical span at residues 206–226 (FIVSFSLPMSFVAICYGLITT). Residues 227–242 (KIHKKAFVNSSRPFRV) are Cytoplasmic-facing. Residues 243 to 266 (LTGVVASFFICWFPFQLVALLGTV) traverse the membrane as a helical segment. Residues 267–286 (WLKEMQFSGSYKIIGRLVNP) lie on the Extracellular side of the membrane. Residues 287-306 (TSSLAFFNSCLNPILYVFMG) traverse the membrane as a helical segment. The Cytoplasmic segment spans residues 307–351 (QDFQERLIHSLSSRLQRALSEDSGHISDTRTNLASLPEDIEIKAI).

This sequence belongs to the G-protein coupled receptor 1 family. As to expression, expressed exclusively in vomeronasal neurons. Expressed in 0.6 % of a subset of sensory neurons located in the basal layer of the vomeronasal organ. Each neuron appears to express only one receptor gene. Expressed mostly in neutrophils, followed by spleen and lung and expressed at very low levels in heart and liver.

Its subcellular location is the cell membrane. In terms of biological role, low affinity receptor for N-formyl-methionyl peptides. Receptor for lipoxin A4. May have an olfactory function associated with the identification of pathogens or of pathogenic states. The chain is Formyl peptide receptor-related sequence 1 (Fpr-s1) from Mus musculus (Mouse).